Consider the following 101-residue polypeptide: Ubiquitin-related modifier 1 (101 aa).

A 1-thioglycine modification is found at Gly-101. Residue Gly-101 forms a Glycyl lysine isopeptide (Gly-Lys) (interchain with K-? in acceptor proteins) linkage.

The protein belongs to the URM1 family. In terms of assembly, component of a complex at least composed of URM1, CTU2/NCS2 and CTU1/ATPBD3. Post-translationally, C-terminal thiocarboxylation occurs in 2 steps, it is first acyl-adenylated (-COAMP) via the hesA/moeB/thiF part of MOCS3, then thiocarboxylated (-COSH) via the rhodanese domain of MOCS3.

It localises to the cytoplasm. The protein operates within tRNA modification; 5-methoxycarbonylmethyl-2-thiouridine-tRNA biosynthesis. Acts as a sulfur carrier required for 2-thiolation of mcm(5)S(2)U at tRNA wobble positions of cytosolic tRNA(Lys), tRNA(Glu) and tRNA(Gln). Serves as sulfur donor in tRNA 2-thiolation reaction by being thiocarboxylated (-COSH) at its C-terminus by MOCS3. The sulfur is then transferred to tRNA to form 2-thiolation of mcm(5)S(2)U. Also acts as a ubiquitin-like protein (UBL) that is covalently conjugated via an isopeptide bond to lysine residues of target proteins such as MOCS3, ATPBD3, CTU2, USP15 and CAS. The thiocarboxylated form serves as substrate for conjugation and oxidative stress specifically induces the formation of UBL-protein conjugates. The polypeptide is Ubiquitin-related modifier 1 (Bos taurus (Bovine)).